A 350-amino-acid polypeptide reads, in one-letter code: Biotin synthase (350 aa).

Residues 38–265 (NHVQVSTLLS…MSAVRLSAGR (228 aa)) enclose the Radical SAM core domain. [4Fe-4S] cluster-binding residues include Cys-53, Cys-57, and Cys-60. Residues Cys-97, Cys-128, Cys-188, and Arg-260 each coordinate [2Fe-2S] cluster.

The protein belongs to the radical SAM superfamily. Biotin synthase family. Homodimer. [4Fe-4S] cluster is required as a cofactor. The cofactor is [2Fe-2S] cluster.

The enzyme catalyses (4R,5S)-dethiobiotin + (sulfur carrier)-SH + 2 reduced [2Fe-2S]-[ferredoxin] + 2 S-adenosyl-L-methionine = (sulfur carrier)-H + biotin + 2 5'-deoxyadenosine + 2 L-methionine + 2 oxidized [2Fe-2S]-[ferredoxin]. It functions in the pathway cofactor biosynthesis; biotin biosynthesis; biotin from 7,8-diaminononanoate: step 2/2. In terms of biological role, catalyzes the conversion of dethiobiotin (DTB) to biotin by the insertion of a sulfur atom into dethiobiotin via a radical-based mechanism. This Vibrio atlanticus (strain LGP32) (Vibrio splendidus (strain Mel32)) protein is Biotin synthase.